Here is a 229-residue protein sequence, read N- to C-terminus: ACD11 homolog protein (229 aa).

An N-acylsphingoid base 1-phosphate-binding residues include glutamate 84, lysine 88, arginine 123, arginine 127, and histidine 166.

The protein belongs to the GLTP family.

This chain is ACD11 homolog protein, found in Arabidopsis thaliana (Mouse-ear cress).